Here is a 159-residue protein sequence, read N- to C-terminus: Ribosome maturation factor RimP (159 aa).

Belongs to the RimP family.

It localises to the cytoplasm. Functionally, required for maturation of 30S ribosomal subunits. This Geotalea uraniireducens (strain Rf4) (Geobacter uraniireducens) protein is Ribosome maturation factor RimP.